The sequence spans 470 residues: 1-aminocyclopropane-1-carboxylate synthase 9 (470 aa).

Positions 47 and 85 each coordinate substrate. Lys272 carries the N6-(pyridoxal phosphate)lysine modification.

This sequence belongs to the class-I pyridoxal-phosphate-dependent aminotransferase family. In terms of assembly, homodimer and heterodimer. In vivo, the relevance of heterodimerization with other ACS enzymes is however unsure. Interacts (via its C-terminal region) with FEI1, FEI2, ETO1 and EOL1. Requires pyridoxal 5'-phosphate as cofactor. In terms of processing, may be processed at its C-terminus. As to expression, expressed in roots and siliques.

It catalyses the reaction S-adenosyl-L-methionine = 1-aminocyclopropane-1-carboxylate + S-methyl-5'-thioadenosine + H(+). It participates in alkene biosynthesis; ethylene biosynthesis via S-adenosyl-L-methionine; ethylene from S-adenosyl-L-methionine: step 1/2. Its function is as follows. 1-aminocyclopropane-1-carboxylate synthase (ACS) enzymes catalyze the conversion of S-adenosyl-L-methionine (SAM) into 1-aminocyclopropane-1-carboxylate (ACC), a direct precursor of ethylene. This chain is 1-aminocyclopropane-1-carboxylate synthase 9 (ACS9), found in Arabidopsis thaliana (Mouse-ear cress).